The sequence spans 299 residues: UDP-N-acetylenolpyruvoylglucosamine reductase (299 aa).

The FAD-binding PCMH-type domain maps to Lys27 to Gly192. The active site involves Arg172. The interval Ala206–Asn225 is disordered. A compositionally biased stretch (polar residues) spans Arg208–Lys224. The active-site Proton donor is Ser221. The active site involves Glu291.

The protein belongs to the MurB family. FAD is required as a cofactor.

It localises to the cytoplasm. It carries out the reaction UDP-N-acetyl-alpha-D-muramate + NADP(+) = UDP-N-acetyl-3-O-(1-carboxyvinyl)-alpha-D-glucosamine + NADPH + H(+). It functions in the pathway cell wall biogenesis; peptidoglycan biosynthesis. Cell wall formation. This chain is UDP-N-acetylenolpyruvoylglucosamine reductase, found in Sphingopyxis alaskensis (strain DSM 13593 / LMG 18877 / RB2256) (Sphingomonas alaskensis).